A 674-amino-acid chain; its full sequence is tRNA 5-methylaminomethyl-2-thiouridine biosynthesis bifunctional protein MnmC (674 aa).

The segment at 1 to 246 is tRNA (mnm(5)s(2)U34)-methyltransferase; sequence MFIMSSISHA…KREMIAGSLS (246 aa). An FAD-dependent cmnm(5)s(2)U34 oxidoreductase region spans residues 272–674; sequence IGGGIASATL…RKGKALTQKV (403 aa).

In the N-terminal section; belongs to the methyltransferase superfamily. tRNA (mnm(5)s(2)U34)-methyltransferase family. This sequence in the C-terminal section; belongs to the DAO family. FAD serves as cofactor.

Its subcellular location is the cytoplasm. The catalysed reaction is 5-aminomethyl-2-thiouridine(34) in tRNA + S-adenosyl-L-methionine = 5-methylaminomethyl-2-thiouridine(34) in tRNA + S-adenosyl-L-homocysteine + H(+). Functionally, catalyzes the last two steps in the biosynthesis of 5-methylaminomethyl-2-thiouridine (mnm(5)s(2)U) at the wobble position (U34) in tRNA. Catalyzes the FAD-dependent demodification of cmnm(5)s(2)U34 to nm(5)s(2)U34, followed by the transfer of a methyl group from S-adenosyl-L-methionine to nm(5)s(2)U34, to form mnm(5)s(2)U34. The protein is tRNA 5-methylaminomethyl-2-thiouridine biosynthesis bifunctional protein MnmC of Vibrio cholerae serotype O1 (strain ATCC 39315 / El Tor Inaba N16961).